We begin with the raw amino-acid sequence, 1463 residues long: Nitric oxide synthase 1 (1463 aa).

Residues 1–200 form an interaction with NOSIP region; sequence MESHMFSVQQ…LQGSGENNKL (200 aa). The PDZ domain maps to 17–99; that stretch reads SVRLFKRKVG…ETHVVLILRG (83 aa). Disordered regions lie at residues 110 to 194, 215 to 250, and 268 to 298; these read TFTG…LQGS, GKAI…LPLG, and VVLN…SKCP. The DYNLL1/PIN/nNOS-inhibiting protein-binding stretch occupies residues 158-240; it reads PDPGQEASSL…VEVQVDRDPD (83 aa). Residues 226–243 are compositionally biased toward basic and acidic residues; it reads TETKDVEVQVDRDPDSKS. Residues 280–294 show a composition bias toward polar residues; that stretch reads PSASGKQSPTKNGSP. (6R)-L-erythro-5,6,7,8-tetrahydrobiopterin is bound at residue serine 334. Cysteine 415 serves as a coordination point for heme b. Positions 478, 587, 588, and 592 each coordinate L-arginine. (6R)-L-erythro-5,6,7,8-tetrahydrobiopterin is bound by residues valine 677, tryptophan 678, and phenylalanine 691. Tyrosine 706 contributes to the heme b binding site. Positions 725–745 are calmodulin-binding; that stretch reads KRRAIGFKKLAEAVKFSAKLM. The Flavodoxin-like domain maps to 755 to 969; sequence ATILYATETG…AFRTWAKKVF (215 aa). 8 residues coordinate FMN: threonine 761, glutamate 762, threonine 763, lysine 765, serine 766, serine 807, threonine 808, and glycine 812. Residues serine 881, serine 891, and serine 892 each carry the phosphoserine modification. Serine 920, histidine 925, cysteine 927, glutamate 953, and glutamine 957 together coordinate FMN. Residues 1024–1271 enclose the FAD-binding FR-type domain; the sequence is KRVSAARLLS…VRGAPSFHLP (248 aa). Residue arginine 1044 coordinates NADP(+). The FAD site is built by histidine 1066, arginine 1207, tyrosine 1208, tyrosine 1209, serine 1210, threonine 1225, and alanine 1227. Residue serine 1230 coordinates NADP(+). The FAD site is built by tyrosine 1231, valine 1244, cysteine 1245, and serine 1246. NADP(+) is bound by residues threonine 1285, arginine 1318, serine 1347, arginine 1348, lysine 1354, tyrosine 1356, glutamine 1358, aspartate 1391, threonine 1432, and arginine 1434.

It belongs to the NOS family. As to quaternary structure, homodimer. Interacts with DLG4; the interaction possibly being prevented by the association between NOS1 and CAPON. Forms a ternary complex with CAPON and RASD1. Forms a ternary complex with CAPON and SYN1. Interacts with ZDHHC23. Interacts with NOSIP; which may impair its synaptic location. Interacts with HTR4. Interacts with SLC6A4. Interacts with VAC14. Interacts (via N-terminal domain) with DLG4 (via N-terminal tandem pair of PDZ domains). Interacts with SLC6A4. Forms a complex with ASL, ASS1 and SLC7A1; the complex regulates cell-autonomous L-arginine synthesis and citrulline recycling while channeling extracellular L-arginine to nitric oxide synthesis pathway. Interacts with DMD; localizes NOS1 to sarcolemma in muscle cells. Interacts with DYNLL1; inhibits the nitric oxide synthase activity. Heme b serves as cofactor. Requires FAD as cofactor. FMN is required as a cofactor. It depends on (6R)-L-erythro-5,6,7,8-tetrahydrobiopterin as a cofactor. In terms of processing, ubiquitinated; mediated by STUB1/CHIP in the presence of Hsp70 and Hsp40 (in vitro).

It localises to the cell membrane. The protein resides in the sarcolemma. Its subcellular location is the cell projection. The protein localises to the dendritic spine. The catalysed reaction is 2 L-arginine + 3 NADPH + 4 O2 + H(+) = 2 L-citrulline + 2 nitric oxide + 3 NADP(+) + 4 H2O. With respect to regulation, stimulated by calcium/calmodulin. Inhibited by DYNLL1 that prevents the dimerization of the protein. Inhibited by NOSIP. Produces nitric oxide (NO) which is a messenger molecule with diverse functions throughout the body. In the brain and peripheral nervous system, NO displays many properties of a neurotransmitter. Probably has nitrosylase activity and mediates cysteine S-nitrosylation of cytoplasmic target proteins such SRR. The protein is Nitric oxide synthase 1 (NOS1) of Ovis aries (Sheep).